Here is a 190-residue protein sequence, read N- to C-terminus: Segregation and condensation protein B (190 aa).

This sequence belongs to the ScpB family. Homodimer. Homodimerization may be required to stabilize the binding of ScpA to the Smc head domains. Component of a cohesin-like complex composed of ScpA, ScpB and the Smc homodimer, in which ScpA and ScpB bind to the head domain of Smc. The presence of the three proteins is required for the association of the complex with DNA.

Its subcellular location is the cytoplasm. In terms of biological role, participates in chromosomal partition during cell division. May act via the formation of a condensin-like complex containing Smc and ScpA that pull DNA away from mid-cell into both cell halves. The sequence is that of Segregation and condensation protein B from Alkaliphilus metalliredigens (strain QYMF).